The following is a 474-amino-acid chain: Kynureninase 2 (474 aa).

Pyridoxal 5'-phosphate contacts are provided by residues Leu144, Thr145, 172 to 175 (FPSD), Asp258, His261, and Tyr283. Position 284 is an N6-(pyridoxal phosphate)lysine (Lys284). The pyridoxal 5'-phosphate site is built by Trp323 and Thr351.

This sequence belongs to the kynureninase family. Homodimer. Pyridoxal 5'-phosphate is required as a cofactor.

It is found in the cytoplasm. It catalyses the reaction L-kynurenine + H2O = anthranilate + L-alanine + H(+). It carries out the reaction 3-hydroxy-L-kynurenine + H2O = 3-hydroxyanthranilate + L-alanine + H(+). It participates in amino-acid degradation; L-kynurenine degradation; L-alanine and anthranilate from L-kynurenine: step 1/1. Its pathway is cofactor biosynthesis; NAD(+) biosynthesis; quinolinate from L-kynurenine: step 2/3. Functionally, catalyzes the cleavage of L-kynurenine (L-Kyn) and L-3-hydroxykynurenine (L-3OHKyn) into anthranilic acid (AA) and 3-hydroxyanthranilic acid (3-OHAA), respectively. The polypeptide is Kynureninase 2 (bna5-2) (Emericella nidulans (strain FGSC A4 / ATCC 38163 / CBS 112.46 / NRRL 194 / M139) (Aspergillus nidulans)).